A 632-amino-acid chain; its full sequence is Golgin subfamily A member 8O (632 aa).

The disordered stretch occupies residues methionine 1 to glutamate 76. A compositionally biased stretch (polar residues) spans threonine 38–glycine 50. Coiled coils occupy residues valine 85 to tyrosine 150 and glutamate 209 to alanine 421. Disordered regions lie at residues proline 423–serine 452, aspartate 505–glutamate 524, and asparagine 552–glycine 612. Over residues histidine 427–proline 440 the composition is skewed to basic and acidic residues. Residues leucine 508 to glycine 520 show a composition bias toward gly residues. Positions alanine 569–glutamate 578 are enriched in basic and acidic residues.

The protein belongs to the GOLGA6 family.

This chain is Golgin subfamily A member 8O (GOLGA8O), found in Homo sapiens (Human).